Reading from the N-terminus, the 343-residue chain is MFGFGHHHNQAPAAPSDPNQIFKIFCRANENYCLTVRDSAVVLAPVNPKDEHQHWFKDMRFSTKVKDGEGMPAFALVNKATGLAVKHSLGQSHPVKLVPFNPEYEDASVLWTESKDVGKGFRCIRMVNNTRLNLDAFHGDKDHGGVRDGTTVVLWEWCKGDNQSWKILPWGPEAHSSSPGAATACTIGGVPVHTVRVFSAAGEDYCLTVRNGTACLAPKNPRDDYQHWIKDMRHSNKIRDEEGYPAFALVNKVTGEAIKHSTGQGHPVKLVPYNPEYQDESVLWTESKDVGKGFRCIRMVNNIYLNFDAFHGDKDHGGIHDGTEIVLWKWCEGDNQRWKILPW.

Residues 194–340 enclose the Ricin B-type lectin domain; the sequence is TVRVFSAAGE…CEGDNQRWKI (147 aa).

Lectin which binds carbohydrates in vitro. Interacts through its lectin domain with glycan structures containing specific motifs. This Oryza sativa subsp. japonica (Rice) protein is Ricin B-like lectin R40G2.